We begin with the raw amino-acid sequence, 568 residues long: Sulfite reductase [NADPH] hemoprotein beta-component (568 aa).

Cysteine 426, cysteine 432, cysteine 471, and cysteine 475 together coordinate [4Fe-4S] cluster. Residue cysteine 475 participates in siroheme binding.

It belongs to the nitrite and sulfite reductase 4Fe-4S domain family. Alpha(8)-beta(8). The alpha component is a flavoprotein, the beta component is a hemoprotein. Requires siroheme as cofactor. It depends on [4Fe-4S] cluster as a cofactor.

It carries out the reaction hydrogen sulfide + 3 NADP(+) + 3 H2O = sulfite + 3 NADPH + 4 H(+). The protein operates within sulfur metabolism; hydrogen sulfide biosynthesis; hydrogen sulfide from sulfite (NADPH route): step 1/1. In terms of biological role, component of the sulfite reductase complex that catalyzes the 6-electron reduction of sulfite to sulfide. This is one of several activities required for the biosynthesis of L-cysteine from sulfate. The chain is Sulfite reductase [NADPH] hemoprotein beta-component from Xylella fastidiosa (strain M23).